Here is a 172-residue protein sequence, read N- to C-terminus: Protein LOL2 (172 aa).

Putative zinc finger stretches follow at residues 4 to 34 (QIVC…VSST), 44 to 74 (HLIC…VNLV), and 82 to 112 (HLNC…ITNT).

The protein localises to the nucleus. Putative zinc finger that may be involved in programmed cell death and defense response. This chain is Protein LOL2 (LOL2), found in Oryza sativa subsp. japonica (Rice).